Consider the following 728-residue polypeptide: Ophiobolin F synthase oblA (728 aa).

Residues 1-322 (MEYKYSTIVD…RYHFPGRWNE (322 aa)) are (7Z)-ophiobola-7,19-dien-3-ol synthase. Aspartate 93 and aspartate 97 together coordinate Mg(2+). Position 93 (aspartate 93) interacts with substrate. The short motif at 93–97 (DDEID) is the DDXXD 1 element. Residues 182-185 (RCMD), asparagine 226, 230-234 (SYEKE), and 313-314 (RY) each bind substrate. The NSE/DTE signature appears at 226-234 (NDLFSYEKE). The geranylfarnesyl diphosphate synthase stretch occupies residues 323–728 (LQKLRAEHGI…LRLMVDMLKV (406 aa)). Residues 362 to 371 (GINGTNGVNG) show a composition bias toward low complexity. The segment at 362 to 394 (GINGTNGVNGKRNRDEDGDENDARINGNGFKKP) is disordered. Positions 439, 442, and 471 each coordinate isopentenyl diphosphate. Positions 478 and 482 each coordinate Mg(2+). Residues 478–482 (DDIED) carry the DDXXD 2 motif. Residue arginine 487 coordinates dimethylallyl diphosphate. Position 488 (arginine 488) interacts with isopentenyl diphosphate. Dimethylallyl diphosphate is bound by residues lysine 565, threonine 566, glutamine 604, asparagine 611, lysine 621, and lysine 631.

The protein in the N-terminal section; belongs to the terpene synthase family. In the C-terminal section; belongs to the FPP/GGPP synthase family. Requires Mg(2+) as cofactor.

The enzyme catalyses isopentenyl diphosphate + (2E,6E)-farnesyl diphosphate = (2E,6E,10E)-geranylgeranyl diphosphate + diphosphate. It carries out the reaction isopentenyl diphosphate + (2E,6E,10E)-geranylgeranyl diphosphate = (2E,6E,10E,14E)-geranylfarnesyl diphosphate + diphosphate. It catalyses the reaction (2E,6E,10E,14E)-geranylfarnesyl diphosphate + H2O = ophiobolin F + diphosphate. It functions in the pathway secondary metabolite biosynthesis; terpenoid biosynthesis. Functionally, bifunctional sesterterpene synthase; part of the gene cluster that mediates the biosynthesis of the sesterterpenes ophiobolins, fungal phytotoxins with potential anti-cancer activities. The first step of the pathway is performed by the sesterterpene synthase oblA that possesses both prenyl transferase and terpene cyclase activity, converting isopentenyl diphosphate and dimethylallyl diphosphate into geranylfarnesyl diphosphate (GFPP) and further converting GFPP into ophiobolin F, respectively. Other sesterterpenoids (C(25) terpenoids) are found as minor products of oblA. The cytochrome P450 monooxygenase oblB then catalyzes a four-step oxidative transformation of ophiobolin F to yield ophiobolin C. The function of the cytochrome P450 monooxygenase oblE has still to be determined. The protein is Ophiobolin F synthase oblA of Emericella variicolor (Aspergillus stellatus).